Reading from the N-terminus, the 343-residue chain is UDP-3-O-acylglucosamine N-acyltransferase 2 (343 aa).

His-251 serves as the catalytic Proton acceptor.

Belongs to the transferase hexapeptide repeat family. LpxD subfamily. In terms of assembly, homotrimer.

The enzyme catalyses a UDP-3-O-[(3R)-3-hydroxyacyl]-alpha-D-glucosamine + a (3R)-hydroxyacyl-[ACP] = a UDP-2-N,3-O-bis[(3R)-3-hydroxyacyl]-alpha-D-glucosamine + holo-[ACP] + H(+). It functions in the pathway bacterial outer membrane biogenesis; LPS lipid A biosynthesis. Catalyzes the N-acylation of UDP-3-O-acylglucosamine using 3-hydroxyacyl-ACP as the acyl donor. Is involved in the biosynthesis of lipid A, a phosphorylated glycolipid that anchors the lipopolysaccharide to the outer membrane of the cell. This Legionella pneumophila (strain Paris) protein is UDP-3-O-acylglucosamine N-acyltransferase 2.